The following is a 446-amino-acid chain: NADH-quinone oxidoreductase subunit D (446 aa).

This sequence belongs to the complex I 49 kDa subunit family. In terms of assembly, NDH-1 is composed of 14 different subunits. Subunits NuoB, C, D, E, F, and G constitute the peripheral sector of the complex.

The protein resides in the cell membrane. The enzyme catalyses a quinone + NADH + 5 H(+)(in) = a quinol + NAD(+) + 4 H(+)(out). Functionally, NDH-1 shuttles electrons from NADH, via FMN and iron-sulfur (Fe-S) centers, to quinones in the respiratory chain. The immediate electron acceptor for the enzyme in this species is believed to be a menaquinone. Couples the redox reaction to proton translocation (for every two electrons transferred, four hydrogen ions are translocated across the cytoplasmic membrane), and thus conserves the redox energy in a proton gradient. This chain is NADH-quinone oxidoreductase subunit D, found in Nocardioides sp. (strain ATCC BAA-499 / JS614).